Reading from the N-terminus, the 1682-residue chain is Merozoite surface protein 1 (1682 aa).

The N-terminal stretch at 1–19 (MKIIFFLCSFLFFIINTQC) is a signal peptide. A disordered region spans residues 68 to 110 (AVSTQSAKNPPGATVPSGTASTKGAIRSPGAANPSDDSSDSDA). 4 N-linked (GlcNAc...) asparagine glycosylation sites follow: N233, N462, N528, and N599. Residues 696-729 (SETTEDGGHSTHTLSQSGETEVTEETEETVGHTT) form a disordered region. Residues N785, N881, N901, N947, N1071, and N1178 are each glycosylated (N-linked (GlcNAc...) asparagine). A disordered region spans residues 870–918 (ITGTSSTSSPGNTTVNTAQSATHSNSQNQQSNASSTNTQNGVAVSSGPA). Residues 871–909 (TGTSSTSSPGNTTVNTAQSATHSNSQNQQSNASSTNTQN) are compositionally biased toward low complexity. 2 disordered regions span residues 1212–1241 (TPPQPDVTPSPLSVRVSGSSGSTKEETQIP) and 1433–1453 (KEFPSSPPTTPPSPAKTDEQK). Residues 1227-1241 (VSGSSGSTKEETQIP) show a composition bias toward polar residues. The span at 1437–1446 (SSPPTTPPSP) shows a compositional bias: pro residues. N1569 is a glycosylation site (N-linked (GlcNAc...) asparagine). 2 EGF-like domains span residues 1573–1613 (HQCV…VENP) and 1614–1661 (NPTC…IFCS). Cystine bridges form between C1575/C1586, C1580/C1596, C1598/C1609, C1617/C1630, C1624/C1644, and C1646/C1660. S1661 carries GPI-anchor amidated serine lipidation. Positions 1662–1682 (SSNFLGISFLLILMLILYSFI) are cleaved as a propeptide — removed in mature form.

Forms a complex composed of subunits p83, p30, p38, and p42 which remain non-covalently associated; the complex is formed at the merozoite surface prior to egress from host erythrocytes. Forms a complex composed of processed MSP1 subunits, MSP6 subunit p36 and MSP7; the complex is formed at the merozoite surface prior to egress from host erythrocytes. Within the complex, interacts (via subunit p38) with MSP6 subunit p36 and (via subunits p83, p30 and p38) with MSP7 (via subunit p22). Forms a complex composed of MSP1, MSP6, DBLMSP1 and DBLMSP2. Within the complex, interacts (via subunit p38) with DBLMSP1 and DBLMSP2. Forms a complex composed of MSP1, and rhoptry proteins RhopH3, RAP1 and CLAG9/RhopH3. Within the complex, interacts (via subunits p42 and p19) with RhopH3 (via C-terminus). Forms a complex composed of MSP1, MSP6, MSP7, MSP9 and MSP3; within the complex, MSP6 and MSP9 mediate the binding to the host erythrocyte. Interacts (via subunits p19 and p42) with MSP9; the interaction is direct; MSP1 subunits p19 or p42, and MSP9 form a co-ligand complex that interacts with host SLC4A1/Band 3 protein. May interact with PFD6. Interacts with host spectrin. In terms of assembly, interacts with host glycophorin GYPA in a sialic acid-independent manner. As to quaternary structure, interacts with host proinflammatory cytokine S100P; the interaction blocks S100P inflammatory and chemotactic activities. Interacts with host SLC4A1/Band 3 (via 5ABC region) on the host erythrocyte surface in a sialic acid-independent manner. In terms of processing, the p190 precursor is cleaved by SUB1 prior to merozoite egress into 4 subunits p83, p30, p38, and p42 which remain non-covalently associated. SUB1-mediated proteolytic cleavage occurs in an orderly manner; the first cleavage occurs at the p30/p38 site, followed by cleavage at the p83/p30 site, the last cleavage occurs at the p38/p42 site. The order of cleavage is essential for parasite viability. SUB1-mediated processing is essential for merozoite egress. In a second processing step during erythrocyte invasion, p42 is cleaved by SUB2 into p33 and p19; the latter remains attached to the merozoite surface via its GPI-anchor and is endocytosed during the subsequent ring stage.

Its subcellular location is the cell membrane. It is found in the secreted. The protein localises to the vacuole membrane. Its function is as follows. During the asexual blood stage, involved in merozoite egress from host erythrocytes possibly via its interaction with the host cytoskeleton protein spectrin resulting in the destabilization of the host cytoskeleton and thus leading to erythrocyte cell membrane rupture. Involved in the binding to host erythrocytes and is required for host erythrocyte invasion. In terms of biological role, by binding to host proinflammatory cytokine S100P may interfere with host immune responses. Involved in merozoite invasion of host erythrocytes. May play a role in the biogenesis and/or function of the food vacuole during the intraerythrocytic development. The protein is Merozoite surface protein 1 of Plasmodium falciparum (isolate ro-33 / Ghana).